The following is a 229-amino-acid chain: Allatostatin-A (229 aa).

The N-terminal stretch at Met1–Cys18 is a signal peptide. A propeptide spanning residues Ala19–Ala48 is cleaved from the precursor. A disordered region spans residues Met23 to Pro46. The residue at position 58 (Leu58) is a Leucine amide. A propeptide spanning residues Ala62–Gly80 is cleaved from the precursor. Residue Leu90 is modified to Leucine amide. Positions Ser94 to Glu130 are excised as a propeptide. Leu140 carries the leucine amide modification. Positions Phe144–Glu152 are excised as a propeptide. Leucine amide occurs at positions 162, 173, 184, 196, and 210. A propeptide spanning residues Ser214 to Val229 is cleaved from the precursor.

Belongs to the allatostatin family. In terms of tissue distribution, allatostatin-A-1: Expressed in antennal lobe (AL), corpora cardiaca (CC), corpora allata (CA) and gnathal ganglion (GNG) (at protein level). Expression in AL and GNG detected in most animals, in CC and CA in some animals (at protein level). Allatostatin-A-3: Expressed in antennal lobe (AL), corpora cardiaca (CC), corpora allata (CA) and gnathal ganglion (GNG) (at protein level). Expression in AL detected in all animals, in GNG, CC and CA in most animals (at protein level). Allatostatin-A-4: Expressed in antennal lobe (AL), corpora cardiaca (CC), corpora allata (CA) and gnathal ganglion (GNG) in all animals (at protein level). Allatostatin-A-5: Expressed in antennal lobe (AL), corpora cardiaca (CC), corpora allata (CA) and gnathal ganglion (GNG) in all animals (at protein level). Allatostatin-A-6: Expressed in antennal lobe (AL) and gnathal ganglion (GNG) (at protein level). Expression in AL detected in some animals, in GNG in few animals (at protein level). Not expressed in corpora cardiaca (CC) and corpora allata (CA) (at protein level). Allatostatin-A-7: Expressed in antennal lobe (AL), corpora cardiaca (CC), corpora allata (CA) and gnathal ganglion (GNG) (at protein level). Expression in AL detected in all animals, in GNG, CC and CA in most animals (at protein level). Allatostatin-A-8: Expressed in antennal lobe (AL), corpora cardiaca (CC), corpora allata (CA) and gnathal ganglion (GNG) (at protein level). Expression in AL detected in all animals, in GNG, CC and CA in most animals (at protein level). Allatostatin-A-9: Expressed in antennal lobe (AL), corpora cardiaca (CC), corpora allata (CA) and gnathal ganglion (GNG) (at protein level). Expression in AL detected in all animals, in GNG in most animals and in CC and CA in some animals (at protein level).

It is found in the secreted. Functionally, neuropeptide inhibitors of juvenile hormone synthesis and gut muscle contraction. In Agrotis ipsilon (Black cutworm moth), this protein is Allatostatin-A.